The sequence spans 1200 residues: Chromosome partition protein Smc (1200 aa).

32 to 39 (PNGCGKSN) contributes to the ATP binding site. Coiled coils occupy residues 171-219 (VTKY…AEKY) and 252-342 (LENL…MSEA). Positions 528 to 644 (QGIFGLVADV…QDVATARAWT (117 aa)) constitute an SMC hinge domain. Coiled coils occupy residues 679–706 (ALQK…ILTR) and 735–762 (LASQ…LEVE). The disordered stretch occupies residues 763-795 (EGQLTQSHQALEHEEEASRGEVAHGQADREGRE). The segment covering 772–795 (ALEHEEEASRGEVAHGQADREGRE) has biased composition (basic and acidic residues). A coiled-coil region spans residues 1002–1039 (HAELSKRYDFLTAQKKDLQSSIEQLKEAIQRIDATSRE).

This sequence belongs to the SMC family. In terms of assembly, homodimer. Probably forms the Structural Maintenance of Chromosome (SMC) condensin-like complex with ScpA and ScpB.

The protein localises to the cytoplasm. Functionally, a conditionally essential component of the chromosome segregation machinery. Required for chromosome condensation and partitioning. Important for positioning of ParB-parS complexes (ori of replication) and of the ter replication site, as well as for segration of the ParB-parS complex and thus chromosome segregation. May act via the formation of a condensin-like complex containing Smc, ScpA and ScpB that pulls DNA away from mid-cell into both cell halves. The polypeptide is Chromosome partition protein Smc (Myxococcus xanthus (strain DK1622)).